A 24-amino-acid chain; its full sequence is 47 kDa cell wall protein (24 aa).

It localises to the secreted. Its subcellular location is the cell wall. This Nicotiana tabacum (Common tobacco) protein is 47 kDa cell wall protein.